The primary structure comprises 342 residues: Probable alcohol acetyltransferase (342 aa).

Residues 1 to 38 (MMILGKAGILAQYGTIYVRQNTIRNNLSSCIFKQSLCA) constitute a mitochondrion transit peptide. Positions 39–46 (FHSLAKVL) are cleaved as a propeptide — removed in mature form. The AB hydrolase-1 domain maps to 75–326 (PPIIILHGLF…AGHWVNAEKP (252 aa)). Active-site charge relay system residues include Ser-152 and His-319.

It belongs to the AB hydrolase superfamily. Post-translationally, processed by both the mitochondrial processing peptidase (MPP) and the mitochondrial octapeptidyl aminopeptidase (OCT1).

It is found in the mitochondrion. Probable alcohol acetyltransferase that uses acetyl-CoA to synthesize acetate esters from various alcohols. Not involved in the synthesis of ethyl acetate. The sequence is that of Probable alcohol acetyltransferase (IMO32) from Saccharomyces cerevisiae (strain ATCC 204508 / S288c) (Baker's yeast).